A 96-amino-acid chain; its full sequence is Class I hydrophobin 2 (96 aa).

The first 15 residues, 1 to 15, serve as a signal peptide directing secretion; the sequence is MFKALIVALAAVAAA. Disulfide bonds link cysteine 28/cysteine 77, cysteine 34/cysteine 71, cysteine 35/cysteine 55, and cysteine 78/cysteine 91.

It belongs to the fungal hydrophobin family.

The protein resides in the secreted. The protein localises to the cell wall. In terms of biological role, aerial growth, conidiation, and dispersal of filamentous fungi in the environment rely upon a capability of their secreting small amphipathic proteins called hydrophobins (HPBs) with low sequence identity. Class I can self-assemble into an outermost layer of rodlet bundles on aerial cell surfaces, conferring cellular hydrophobicity that supports fungal growth, development and dispersal; whereas Class II form highly ordered films at water-air interfaces through intermolecular interactions but contribute nothing to the rodlet structure. Hyd2 plays a neglectable role in hyphal growth and asexual development and does not seem involved in cellular hydrophobicity, conidial adhesion, stress tolerance nor insect pathogenicity. This Metarhizium robertsii (strain ARSEF 23 / ATCC MYA-3075) (Metarhizium anisopliae (strain ARSEF 23)) protein is Class I hydrophobin 2.